We begin with the raw amino-acid sequence, 121 residues long: Histone H2B.6 (121 aa).

The segment at 1–28 (MAPKAEKKPKVEKRVPGKEGETSKKKAK) is disordered. N6-acetyllysine occurs at positions 7 and 13.

Belongs to the histone H2B family. The nucleosome is a histone octamer containing two molecules each of H2A, H2B, H3 and H4 assembled in one H3-H4 heterotetramer and two H2A-H2B heterodimers. The octamer wraps approximately 147 bp of DNA. In terms of processing, can be acetylated to form H2BK6ac and H2BK33ac. As to expression, expressed preferentially in meristematic tissues.

The protein resides in the nucleus. It localises to the chromosome. In terms of biological role, core component of nucleosome. Nucleosomes wrap and compact DNA into chromatin, limiting DNA accessibility to the cellular machineries which require DNA as a template. Histones thereby play a central role in transcription regulation, DNA repair, DNA replication and chromosomal stability. DNA accessibility is regulated via a complex set of post-translational modifications of histones, also called histone code, and nucleosome remodeling. In Triticum aestivum (Wheat), this protein is Histone H2B.6 (TH123).